Here is a 419-residue protein sequence, read N- to C-terminus: Hyaluronan synthase (419 aa).

The next 5 membrane-spanning stretches (helical) occupy residues 8–28 (LIVL…MYLF), 33–53 (VGIY…LSFL), 318–338 (IVAL…VAIG), 345–365 (AIQL…IVAL), and 376–396 (PASF…LQPL).

This sequence belongs to the NodC/HAS family. Mg(2+) serves as cofactor.

The protein resides in the cell membrane. The catalysed reaction is [hyaluronan](n) + UDP-N-acetyl-alpha-D-glucosamine = N-acetyl-beta-D-glucosaminyl-(1-&gt;4)-[hyaluronan](n) + UDP + H(+). It carries out the reaction N-acetyl-beta-D-glucosaminyl-(1-&gt;4)-[hyaluronan](n) + UDP-alpha-D-glucuronate = [hyaluronan](n+1) + UDP + H(+). The protein operates within glycan biosynthesis; hyaluronan biosynthesis. Its function is as follows. Glycosaminoglycan synthesis. The hyaluronic acid capsule is involved in the pathogenicity of group A Streptococci; it may be the major virulence determinant. The sequence is that of Hyaluronan synthase (hasA) from Streptococcus pyogenes serotype M18 (strain MGAS8232).